The sequence spans 307 residues: MNAASTDKPRLRVLAGCTAVGKTEWALRWAEAHNAEIVSCDSLLFYRGMDIGTAKPTAGELARVPHHLVDVCDVREAMNIAGYVAAARRALTEIAARGREALVVGGSGFYLKAFFGPVADDVEVSAAVRAEVAALTPAAAVERLRQLNPPGLGALDTANPRRVVRALERCLASGRTLAELSAAFARQPGPFADWDARLTVLDRDPVELNQRIAARVAAMLAAGLVDEVKRLLPAGLKENPSAARAIGYREVIDLLEGRLPAASLAAEIEKNTRALVKKQRTWFRTQLPDHRRVDAAVLRDAGGLFDF.

ATP is bound at residue 16 to 23; that stretch reads GCTAVGKT. Residue 18-23 participates in substrate binding; the sequence is TAVGKT. Positions 41–44 are interaction with substrate tRNA; that stretch reads DSLL.

The protein belongs to the IPP transferase family. Monomer. Requires Mg(2+) as cofactor.

It carries out the reaction adenosine(37) in tRNA + dimethylallyl diphosphate = N(6)-dimethylallyladenosine(37) in tRNA + diphosphate. In terms of biological role, catalyzes the transfer of a dimethylallyl group onto the adenine at position 37 in tRNAs that read codons beginning with uridine, leading to the formation of N6-(dimethylallyl)adenosine (i(6)A). This chain is tRNA dimethylallyltransferase, found in Opitutus terrae (strain DSM 11246 / JCM 15787 / PB90-1).